A 162-amino-acid polypeptide reads, in one-letter code: NADH-quinone oxidoreductase subunit C (162 aa).

Belongs to the complex I 30 kDa subunit family. As to quaternary structure, NDH-1 is composed of 14 different subunits. Subunits NuoB, C, D, E, F, and G constitute the peripheral sector of the complex.

Its subcellular location is the cell inner membrane. The enzyme catalyses a quinone + NADH + 5 H(+)(in) = a quinol + NAD(+) + 4 H(+)(out). Its function is as follows. NDH-1 shuttles electrons from NADH, via FMN and iron-sulfur (Fe-S) centers, to quinones in the respiratory chain. The immediate electron acceptor for the enzyme in this species is believed to be ubiquinone. Couples the redox reaction to proton translocation (for every two electrons transferred, four hydrogen ions are translocated across the cytoplasmic membrane), and thus conserves the redox energy in a proton gradient. The protein is NADH-quinone oxidoreductase subunit C of Trichlorobacter lovleyi (strain ATCC BAA-1151 / DSM 17278 / SZ) (Geobacter lovleyi).